We begin with the raw amino-acid sequence, 154 residues long: Snaclec dabocetin subunit alpha (154 aa).

Positions 1–23 are cleaved as a signal peptide; that stretch reads MGRFISVSFGLLVVFLSLSGTGA. Intrachain disulfides connect cysteine 25-cysteine 36, cysteine 53-cysteine 148, and cysteine 123-cysteine 140. The C-type lectin domain occupies 32 to 149; that stretch reads HEGHCYKVFK…CGDKNPFICK (118 aa).

The protein belongs to the snaclec family. As to quaternary structure, heterodimer of subunits alpha and beta; disulfide-linked. As to expression, expressed by the venom gland.

It is found in the secreted. In terms of biological role, inhibits ristocetin-induced platelet aggregation via binding to platelet glycoprotein Ibalpha (GP1BA). In Daboia siamensis (Eastern Russel's viper), this protein is Snaclec dabocetin subunit alpha.